Here is a 94-residue protein sequence, read N- to C-terminus: CRISPR-associated endoribonuclease Cas2 1 (94 aa).

Position 8 (D8) interacts with Mg(2+).

Belongs to the CRISPR-associated endoribonuclease Cas2 protein family. Homodimer, forms a heterotetramer with a Cas1 homodimer. The cofactor is Mg(2+).

In terms of biological role, CRISPR (clustered regularly interspaced short palindromic repeat), is an adaptive immune system that provides protection against mobile genetic elements (viruses, transposable elements and conjugative plasmids). CRISPR clusters contain sequences complementary to antecedent mobile elements and target invading nucleic acids. CRISPR clusters are transcribed and processed into CRISPR RNA (crRNA). Involved in the integration of spacer DNA into the CRISPR cassette. Functions as a ssRNA-specific endoribonuclease. This Archaeoglobus fulgidus (strain ATCC 49558 / DSM 4304 / JCM 9628 / NBRC 100126 / VC-16) protein is CRISPR-associated endoribonuclease Cas2 1 (cas21).